Reading from the N-terminus, the 206-residue chain is Insecticyanin-B (206 aa).

An N-terminal signal peptide occupies residues 1–17; that stretch reads MQRFLVFTIVAVATAAA. 2 disulfides stabilise this stretch: cysteine 26-cysteine 136 and cysteine 60-cysteine 192.

This sequence belongs to the calycin superfamily. Lipocalin family. Homotetramer. Synthesized only in the caterpillars, apparently by the epidermis and secreted into the hemolymph. The protein is passed over from the larval hemolymph to that of pupae and adults and is sequestered in the eggs.

It is found in the secreted. This protein binds a chromophore: biliverdin IX, isomer gamma. Mixed with lipoprotein-bound carotenes, this blue protein provides hornworms with their green cryptic coloration which serves a camouflage. The protein is Insecticyanin-B (INSB) of Manduca sexta (Tobacco hawkmoth).